An 88-amino-acid polypeptide reads, in one-letter code: Cell division topological specificity factor (88 aa).

Belongs to the MinE family.

Its function is as follows. Prevents the cell division inhibition by proteins MinC and MinD at internal division sites while permitting inhibition at polar sites. This ensures cell division at the proper site by restricting the formation of a division septum at the midpoint of the long axis of the cell. This is Cell division topological specificity factor from Clostridium botulinum (strain Alaska E43 / Type E3).